The sequence spans 269 residues: 2-heptyl-3-hydroxy-4(1H)-quinolone dioxygenase (269 aa).

His97 serves as a coordination point for substrate. His246 (proton donor/acceptor) is an active-site residue.

The protein belongs to the AB hydrolase superfamily. Monomer.

It catalyses the reaction 2-heptyl-3-hydroxy-4(1H)-quinolone + O2 = N-octanoylanthranilate + CO + H(+). Ring-cleaving dioxygenase involved in the degradation pathway of the Pseudomonas aeruginosa quorum sensing signal molecules HHQ (2-heptyl-4-quinolone) and PQS (2-heptyl-3-hydroxy-4(1H)-quinolone) to anthranilate. Catalyzes the cleavage of PQS to form N-octanoylanthranilate and carbon monoxide. Thus, leads to the inactivation of PQS that plays a central role in the regulation of virulence factor production by P.aeruginosa, thereby quenching the production of antimicrobials, which may contribute to the competitiveness of M.abscessus in presence of P.aeruginosa. In vitro, can also use other 2-alkyl-3-hydroxy-4(1H)-quinolone (AHQ) substrates with shorter alkyl substituents at C2, but with lower efficiency. The chain is 2-heptyl-3-hydroxy-4(1H)-quinolone dioxygenase from Mycobacteroides abscessus (strain ATCC 19977 / DSM 44196 / CCUG 20993 / CIP 104536 / JCM 13569 / NCTC 13031 / TMC 1543 / L948) (Mycobacterium abscessus).